The following is a 388-amino-acid chain: Homeobox protein XHOX-3 (388 aa).

Disordered regions lie at residues 30–109 (AVGS…SDFY) and 131–163 (SAGQCSEPMGGSPVNGSDSSKGGGGSHGSFSAC). Composition is skewed to polar residues over residues 68–81 (ATGQQRSRSPQLRI) and 91–103 (DSLSTKGQHSSSD). A DNA-binding region (homeobox) is located at residues 168-227 (MRRYRTAFTREQIARLEKEFYRENYVSRPRRCELAAALNLPETTIKVWFQNRRMKDKRQR).

The protein belongs to the even-skipped homeobox family.

Its subcellular location is the nucleus. Functionally, may be required for posterior development and development of normal embryonic axial pattern. This chain is Homeobox protein XHOX-3 (xhox3), found in Xenopus laevis (African clawed frog).